Consider the following 288-residue polypeptide: tRNA dimethylallyltransferase (288 aa).

17 to 24 is an ATP binding site; the sequence is GPTASGKT. 19-24 contacts substrate; that stretch reads TASGKT.

Belongs to the IPP transferase family. Monomer. Requires Mg(2+) as cofactor.

The catalysed reaction is adenosine(37) in tRNA + dimethylallyl diphosphate = N(6)-dimethylallyladenosine(37) in tRNA + diphosphate. Its function is as follows. Catalyzes the transfer of a dimethylallyl group onto the adenine at position 37 in tRNAs that read codons beginning with uridine, leading to the formation of N6-(dimethylallyl)adenosine (i(6)A). The sequence is that of tRNA dimethylallyltransferase from Jannaschia sp. (strain CCS1).